Reading from the N-terminus, the 213-residue chain is Orotate phosphoribosyltransferase (213 aa).

Residue lysine 26 participates in 5-phospho-alpha-D-ribose 1-diphosphate binding. Position 34–35 (34–35) interacts with orotate; sequence FF. 5-phospho-alpha-D-ribose 1-diphosphate is bound by residues 72–73, arginine 99, lysine 100, lysine 103, histidine 105, and 124–132; these read YK and DDVITAGTA. Threonine 128 and arginine 156 together coordinate orotate.

Belongs to the purine/pyrimidine phosphoribosyltransferase family. PyrE subfamily. In terms of assembly, homodimer. The cofactor is Mg(2+).

It catalyses the reaction orotidine 5'-phosphate + diphosphate = orotate + 5-phospho-alpha-D-ribose 1-diphosphate. Its pathway is pyrimidine metabolism; UMP biosynthesis via de novo pathway; UMP from orotate: step 1/2. In terms of biological role, catalyzes the transfer of a ribosyl phosphate group from 5-phosphoribose 1-diphosphate to orotate, leading to the formation of orotidine monophosphate (OMP). The protein is Orotate phosphoribosyltransferase of Vibrio vulnificus (strain CMCP6).